The chain runs to 432 residues: Adenylosuccinate synthetase (432 aa).

GTP is bound by residues 13–19 (GDEGKGK) and 41–43 (GHT). Residue Asp-14 is the Proton acceptor of the active site. Positions 14 and 41 each coordinate Mg(2+). Residues 14–17 (DEGK), 39–42 (NAGH), Thr-130, Arg-144, Gln-225, Thr-240, and Arg-304 contribute to the IMP site. The active-site Proton donor is His-42. 300–306 (ATTGRRR) contacts substrate. GTP-binding positions include Arg-306, 332 to 334 (KLD), and 415 to 417 (STG).

The protein belongs to the adenylosuccinate synthetase family. Homodimer. The cofactor is Mg(2+).

The protein localises to the cytoplasm. It catalyses the reaction IMP + L-aspartate + GTP = N(6)-(1,2-dicarboxyethyl)-AMP + GDP + phosphate + 2 H(+). It functions in the pathway purine metabolism; AMP biosynthesis via de novo pathway; AMP from IMP: step 1/2. Its function is as follows. Plays an important role in the de novo pathway of purine nucleotide biosynthesis. Catalyzes the first committed step in the biosynthesis of AMP from IMP. The protein is Adenylosuccinate synthetase of Salmonella paratyphi A (strain AKU_12601).